A 76-amino-acid polypeptide reads, in one-letter code: Acyl carrier protein (76 aa).

One can recognise a Carrier domain in the interval 1 to 76; that stretch reads MSIEERVKKI…SAIDYVQNNQ (76 aa). Ser-36 carries the post-translational modification O-(pantetheine 4'-phosphoryl)serine.

It belongs to the acyl carrier protein (ACP) family. 4'-phosphopantetheine is transferred from CoA to a specific serine of apo-ACP by AcpS. This modification is essential for activity because fatty acids are bound in thioester linkage to the sulfhydryl of the prosthetic group.

The protein localises to the cytoplasm. It functions in the pathway lipid metabolism; fatty acid biosynthesis. Functionally, carrier of the growing fatty acid chain in fatty acid biosynthesis. The protein is Acyl carrier protein of Pasteurella multocida (strain Pm70).